The chain runs to 352 residues: DNA polymerase IV (352 aa).

Residues 6–187 enclose the UmuC domain; sequence IIHIDADCFY…VPVKFISGIG (182 aa). Positions 10 and 105 each coordinate Mg(2+). Residue glutamate 106 is part of the active site.

This sequence belongs to the DNA polymerase type-Y family. In terms of assembly, monomer. It depends on Mg(2+) as a cofactor.

Its subcellular location is the cytoplasm. It catalyses the reaction DNA(n) + a 2'-deoxyribonucleoside 5'-triphosphate = DNA(n+1) + diphosphate. Poorly processive, error-prone DNA polymerase involved in untargeted mutagenesis. Copies undamaged DNA at stalled replication forks, which arise in vivo from mismatched or misaligned primer ends. These misaligned primers can be extended by PolIV. Exhibits no 3'-5' exonuclease (proofreading) activity. May be involved in translesional synthesis, in conjunction with the beta clamp from PolIII. The chain is DNA polymerase IV from Marinomonas sp. (strain MWYL1).